The chain runs to 252 residues: Small ribosomal subunit protein uS3 (252 aa).

Positions 38–106 (IRKYIHARLS…EVQINIFEIK (69 aa)) constitute a KH type-2 domain. Positions 214–252 (PLAGMDKKQSGTGGGKGGDAPRGKSNFNKGGKPDARKRK) are disordered. Residues 224–233 (GTGGGKGGDA) are compositionally biased toward gly residues.

It belongs to the universal ribosomal protein uS3 family. In terms of assembly, part of the 30S ribosomal subunit. Forms a tight complex with proteins S10 and S14.

Binds the lower part of the 30S subunit head. Binds mRNA in the 70S ribosome, positioning it for translation. This chain is Small ribosomal subunit protein uS3, found in Flavobacterium johnsoniae (strain ATCC 17061 / DSM 2064 / JCM 8514 / BCRC 14874 / CCUG 350202 / NBRC 14942 / NCIMB 11054 / UW101) (Cytophaga johnsonae).